The primary structure comprises 638 residues: Zinc finger protein 143 (638 aa).

Position 1 is an N-acetylmethionine (Met-1). A Glycyl lysine isopeptide (Lys-Gly) (interchain with G-Cter in SUMO2) cross-link involves residue Lys-213. 4 C2H2-type zinc fingers span residues 237-261 (FRCK…ERSH), 267-291 (YQCE…FRTH), 297-321 (YRCS…IRTH), and 327-351 (FKCP…IRTH). Thr-352 bears the Phosphothreonine mark. 3 consecutive C2H2-type zinc fingers follow at residues 357–381 (YYCT…VRIH), 387–411 (YVCT…HVVH), and 417–440 (YNCN…RTAH). Residue Lys-406 forms a Glycyl lysine isopeptide (Lys-Gly) (interchain with G-Cter in SUMO2) linkage.

It belongs to the GLI C2H2-type zinc-finger protein family. As to quaternary structure, interacts with CHD8. Forms a complex with HCFC1 and ZNF143.

It is found in the nucleus. In terms of biological role, transcriptional activator. In complex with HCFC1 and ZNF143, regulates the expression of several genes, including AP2S1, ESCO2, OPHN1, RBL1, UBXN8 and ZNF32. Activates the gene for selenocysteine tRNA (tRNAsec). Binds to the SPH motif of small nuclear RNA (snRNA) gene promoters. Participates in efficient U6 RNA polymerase III transcription via its interaction with CHD8. In Rattus norvegicus (Rat), this protein is Zinc finger protein 143 (Znf143).